Here is a 395-residue protein sequence, read N- to C-terminus: Vibriobactin-specific isochorismate synthase (395 aa).

Belongs to the isochorismate synthase family.

The enzyme catalyses chorismate = isochorismate. It functions in the pathway siderophore biosynthesis; vibriobactin biosynthesis. This Vibrio cholerae serotype O1 (strain ATCC 39315 / El Tor Inaba N16961) protein is Vibriobactin-specific isochorismate synthase (vibC).